We begin with the raw amino-acid sequence, 717 residues long: DNA ligase (717 aa).

NAD(+) contacts are provided by residues 44–48 (DADYD), 93–94 (SL), and Glu127. The N6-AMP-lysine intermediate role is filled by Lys129. Residues Arg150, Glu186, Lys302, and Lys326 each contribute to the NAD(+) site. Zn(2+)-binding residues include Cys431, Cys434, Cys455, and Cys461. Residues 639 to 717 (STDSPVAGKT…EDEWLALIGG (79 aa)) enclose the BRCT domain.

The protein belongs to the NAD-dependent DNA ligase family. LigA subfamily. Requires Mg(2+) as cofactor. The cofactor is Mn(2+).

It catalyses the reaction NAD(+) + (deoxyribonucleotide)n-3'-hydroxyl + 5'-phospho-(deoxyribonucleotide)m = (deoxyribonucleotide)n+m + AMP + beta-nicotinamide D-nucleotide.. Functionally, DNA ligase that catalyzes the formation of phosphodiester linkages between 5'-phosphoryl and 3'-hydroxyl groups in double-stranded DNA using NAD as a coenzyme and as the energy source for the reaction. It is essential for DNA replication and repair of damaged DNA. The polypeptide is DNA ligase (Sinorhizobium fredii (strain NBRC 101917 / NGR234)).